The sequence spans 227 residues: MGNCVGRQRRERPAAPGHPRKRAGRNEPLKKERLKWKSDYPMTDGQLRSKRDEFWDTAPAFEGRKEIWDALKAAAYAAEANDHELAQAILDGASITLPHGTLCECYDELGNRYQLPIYCLSPPVNLLLEHTEEESLEPPEPPPSVRREFPLKVRLSTGKDVRLSASLPDTVGQLKRQLHAQEGIEPSWQRWFFSGKLLTDRTRLQETKIQKDFVIQVIINQPPPPQD.

The tract at residues 1–35 (MGNCVGRQRRERPAAPGHPRKRAGRNEPLKKERLK) is disordered. Residues 24–35 (GRNEPLKKERLK) are compositionally biased toward basic and acidic residues. One can recognise a Ubiquitin-like domain in the interval 149-224 (FPLKVRLSTG…IQVIINQPPP (76 aa)).

As to quaternary structure, interacts with UBTD1.

May be involved in the regulation of cellular senescence through a positive feedback loop with TP53. Is a TP53 downstream target gene that increases the stability of TP53 protein by promoting the ubiquitination and degradation of MDM2. This Homo sapiens (Human) protein is Ubiquitin domain-containing protein 1 (UBTD1).